A 276-amino-acid chain; its full sequence is Ribosomal RNA small subunit methyltransferase A (276 aa).

Positions 27, 29, 54, 75, 101, and 123 each coordinate S-adenosyl-L-methionine.

Belongs to the class I-like SAM-binding methyltransferase superfamily. rRNA adenine N(6)-methyltransferase family. RsmA subfamily.

It is found in the cytoplasm. It carries out the reaction adenosine(1518)/adenosine(1519) in 16S rRNA + 4 S-adenosyl-L-methionine = N(6)-dimethyladenosine(1518)/N(6)-dimethyladenosine(1519) in 16S rRNA + 4 S-adenosyl-L-homocysteine + 4 H(+). Specifically dimethylates two adjacent adenosines (A1518 and A1519) in the loop of a conserved hairpin near the 3'-end of 16S rRNA in the 30S particle. May play a critical role in biogenesis of 30S subunits. This chain is Ribosomal RNA small subunit methyltransferase A, found in Bartonella henselae (strain ATCC 49882 / DSM 28221 / CCUG 30454 / Houston 1) (Rochalimaea henselae).